Reading from the N-terminus, the 266-residue chain is Type III pantothenate kinase (266 aa).

Residue 9–16 coordinates ATP; it reads DAGNSRIK. Substrate contacts are provided by residues Tyr96 and 103–106; that span reads GSDR. The Proton acceptor role is filled by Asp105. Residue Thr129 coordinates ATP. Thr189 contributes to the substrate binding site.

This sequence belongs to the type III pantothenate kinase family. As to quaternary structure, homodimer. NH4(+) is required as a cofactor. It depends on K(+) as a cofactor.

It localises to the cytoplasm. It catalyses the reaction (R)-pantothenate + ATP = (R)-4'-phosphopantothenate + ADP + H(+). The protein operates within cofactor biosynthesis; coenzyme A biosynthesis; CoA from (R)-pantothenate: step 1/5. Catalyzes the phosphorylation of pantothenate (Pan), the first step in CoA biosynthesis. This chain is Type III pantothenate kinase, found in Burkholderia lata (strain ATCC 17760 / DSM 23089 / LMG 22485 / NCIMB 9086 / R18194 / 383).